Here is a 261-residue protein sequence, read N- to C-terminus: Phosphatidylglycerol--prolipoprotein diacylglyceryl transferase (261 aa).

Transmembrane regions (helical) follow at residues 13–33 (LQIR…YWYI), 50–70 (VISW…ILFY), 86–106 (WNGG…MYIF), and 112–132 (IDVL…IFFG). Position 133 (Arg133) interacts with a 1,2-diacyl-sn-glycero-3-phospho-(1'-sn-glycerol). Transmembrane regions (helical) follow at residues 169-189 (LYEA…LFFF), 197-217 (GMLS…IEFV), and 232-252 (ITMG…FIKL).

The protein belongs to the Lgt family.

It is found in the cell inner membrane. The catalysed reaction is L-cysteinyl-[prolipoprotein] + a 1,2-diacyl-sn-glycero-3-phospho-(1'-sn-glycerol) = an S-1,2-diacyl-sn-glyceryl-L-cysteinyl-[prolipoprotein] + sn-glycerol 1-phosphate + H(+). It participates in protein modification; lipoprotein biosynthesis (diacylglyceryl transfer). Its function is as follows. Catalyzes the transfer of the diacylglyceryl group from phosphatidylglycerol to the sulfhydryl group of the N-terminal cysteine of a prolipoprotein, the first step in the formation of mature lipoproteins. This is Phosphatidylglycerol--prolipoprotein diacylglyceryl transferase from Ehrlichia canis (strain Jake).